The sequence spans 255 residues: Zinc finger CCCH domain-containing protein 37 (255 aa).

2 C3H1-type zinc fingers span residues 98-128 (AYTGEPCPDFRRRPGAACPRGSTCPFAHGTF) and 137-159 (YRTRPCRAGVACRRRVCFFAHTA).

The protein is Zinc finger CCCH domain-containing protein 37 of Oryza sativa subsp. japonica (Rice).